A 198-amino-acid chain; its full sequence is Na(+)-translocating NADH-quinone reductase subunit E (198 aa).

6 helical membrane-spanning segments follow: residues 11–31 (SIFIENMALSFFLGMCTFLAV), 39–59 (FGLGVAVIVVLTIAIPVNNLV), 77–97 (FLNFITFIGVIAALVQILEMI), 110–130 (GIFLPLITVNCAIFGGVSFMV), 140–160 (IVYGFGSGVGWMLAIVALAGI), and 176–196 (LGITFITVGLMALGFMSFSGV).

Belongs to the NqrDE/RnfAE family. Composed of six subunits; NqrA, NqrB, NqrC, NqrD, NqrE and NqrF.

The protein resides in the cell inner membrane. The enzyme catalyses a ubiquinone + n Na(+)(in) + NADH + H(+) = a ubiquinol + n Na(+)(out) + NAD(+). Its function is as follows. NQR complex catalyzes the reduction of ubiquinone-1 to ubiquinol by two successive reactions, coupled with the transport of Na(+) ions from the cytoplasm to the periplasm. NqrA to NqrE are probably involved in the second step, the conversion of ubisemiquinone to ubiquinol. In Photobacterium profundum (strain SS9), this protein is Na(+)-translocating NADH-quinone reductase subunit E.